The following is a 458-amino-acid chain: ATP synthase subunit beta (458 aa).

Position 148-155 (148-155) interacts with ATP; the sequence is GGAGVGKT.

The protein belongs to the ATPase alpha/beta chains family. In terms of assembly, F-type ATPases have 2 components, CF(1) - the catalytic core - and CF(0) - the membrane proton channel. CF(1) has five subunits: alpha(3), beta(3), gamma(1), delta(1), epsilon(1). CF(0) has three main subunits: a(1), b(2) and c(9-12). The alpha and beta chains form an alternating ring which encloses part of the gamma chain. CF(1) is attached to CF(0) by a central stalk formed by the gamma and epsilon chains, while a peripheral stalk is formed by the delta and b chains.

The protein localises to the cell inner membrane. The enzyme catalyses ATP + H2O + 4 H(+)(in) = ADP + phosphate + 5 H(+)(out). In terms of biological role, produces ATP from ADP in the presence of a proton gradient across the membrane. The catalytic sites are hosted primarily by the beta subunits. This chain is ATP synthase subunit beta, found in Francisella philomiragia subsp. philomiragia (strain ATCC 25017 / CCUG 19701 / FSC 153 / O#319-036).